Here is a 286-residue protein sequence, read N- to C-terminus: Putative chaperone BssE (286 aa).

ATP-binding positions include 47–54 (GKQGCGKS) and 108–115 (GCVIHLEE).

Belongs to the CbbQ/NirQ/NorQ/GpvN family.

In terms of biological role, may have a role in assembly and/or activation of benzylsuccinate synthase. This chain is Putative chaperone BssE (bssE), found in Thauera aromatica.